The primary structure comprises 466 residues: Delta-1 crystallin (466 aa).

It belongs to the lyase 1 family. Argininosuccinate lyase subfamily. Homotetramer. As to expression, eye lens.

Functionally, delta crystallin, the principal crystallin in embryonic lens, is found only in birds and reptiles. Despite possessing the necessary catalytic residues, this protein does not function as an enzymatically active argininosuccinate lyase. This chain is Delta-1 crystallin (ASL1), found in Anas platyrhynchos (Mallard).